Here is a 528-residue protein sequence, read N- to C-terminus: Cytochrome P450 monooxygenase lenC (528 aa).

Residues 5–27 (FVLPHPASMGASCILGLLLLTIL) traverse the membrane as a helical segment. Residue Cys469 participates in heme binding.

The protein belongs to the cytochrome P450 family. Requires heme as cofactor.

Its subcellular location is the membrane. It participates in alkaloid biosynthesis. In terms of biological role, nonribosomal peptide synthetase; part of the gene cluster that mediates the biosynthesis of the ergot alkaloids lentopeptins A and B. Within the pathway, lenC catalyzes the post-NRPS oxidative modification steps using as substrate the N-acyldiketopiperazine intermediate produced by the NRPS lenA. Lentopeptin A forms via a stereospecific hydroxylation, followed by a spontaneous bicyclic lactam core formation, while lentopeptin B is produced through an initial dehydrogenation, followed by a bicyclic lactam core formation and stereospecific hydration. The phenylalanine ammonia-lyase lenB provides the cinnamic acid starter unit to the NRPS lenA for the synthesis of the N-acyldiketopiperazine intermediate which in turn is converted into lentopeptins A and B by lenC. In Aspergillus lentulus, this protein is Cytochrome P450 monooxygenase lenC.